Reading from the N-terminus, the 445-residue chain is Probable carboxypeptidase UREG_07869 (445 aa).

The first 17 residues, 1-17 (MKSLILTTLALLPLVSC), serve as a signal peptide directing secretion. Zn(2+) is bound at residue D165. The active-site Proton acceptor is E197. E198 provides a ligand contact to Zn(2+).

It belongs to the peptidase M20A family. Requires Zn(2+) as cofactor.

Its subcellular location is the secreted. The polypeptide is Probable carboxypeptidase UREG_07869 (Uncinocarpus reesii (strain UAMH 1704)).